The following is a 245-amino-acid chain: Small ribosomal subunit protein uS2 (245 aa).

The tract at residues 226 to 245 is disordered; it reads GGGANVGEMENPPVEATADA.

It belongs to the universal ribosomal protein uS2 family.

This Erythrobacter litoralis (strain HTCC2594) protein is Small ribosomal subunit protein uS2.